A 332-amino-acid chain; its full sequence is Ketol-acid reductoisomerase (NADP(+)) (332 aa).

Residues 2–182 form the KARI N-terminal Rossmann domain; it reads AKVYHDTEVS…GATRAGVLET (181 aa). Residues 25–28, R48, S53, and 83–86 each bind NADP(+); these read YGSQ and DTEQ. H108 is a catalytic residue. G134 is an NADP(+) binding site. Residues 183–328 form the KARI C-terminal knotted domain; the sequence is TFKEETETDL…KVLREMMPWL (146 aa). Mg(2+) contacts are provided by D191, E195, E227, and E231. S252 lines the substrate pocket.

The protein belongs to the ketol-acid reductoisomerase family. Requires Mg(2+) as cofactor.

It catalyses the reaction (2R)-2,3-dihydroxy-3-methylbutanoate + NADP(+) = (2S)-2-acetolactate + NADPH + H(+). It carries out the reaction (2R,3R)-2,3-dihydroxy-3-methylpentanoate + NADP(+) = (S)-2-ethyl-2-hydroxy-3-oxobutanoate + NADPH + H(+). Its pathway is amino-acid biosynthesis; L-isoleucine biosynthesis; L-isoleucine from 2-oxobutanoate: step 2/4. It functions in the pathway amino-acid biosynthesis; L-valine biosynthesis; L-valine from pyruvate: step 2/4. Involved in the biosynthesis of branched-chain amino acids (BCAA). Catalyzes an alkyl-migration followed by a ketol-acid reduction of (S)-2-acetolactate (S2AL) to yield (R)-2,3-dihydroxy-isovalerate. In the isomerase reaction, S2AL is rearranged via a Mg-dependent methyl migration to produce 3-hydroxy-3-methyl-2-ketobutyrate (HMKB). In the reductase reaction, this 2-ketoacid undergoes a metal-dependent reduction by NADPH to yield (R)-2,3-dihydroxy-isovalerate. The protein is Ketol-acid reductoisomerase (NADP(+)) of Dictyoglomus turgidum (strain DSM 6724 / Z-1310).